Here is a 445-residue protein sequence, read N- to C-terminus: Argininosuccinate synthase (445 aa).

Residues 17–25 (AFSGGLDTS) and Ala-43 each bind ATP. Residue Tyr-99 participates in L-citrulline binding. Residues Gly-129 and Thr-131 each coordinate ATP. L-aspartate-binding residues include Thr-131, Asn-135, and Asp-136. An L-citrulline-binding site is contributed by Asn-135. An ATP-binding site is contributed by Asp-136. The L-citrulline site is built by Arg-139 and Ser-192. An ATP-binding site is contributed by Asp-194. The L-citrulline site is built by Thr-201, Glu-203, and Glu-280.

This sequence belongs to the argininosuccinate synthase family. Type 2 subfamily. As to quaternary structure, homotetramer.

It localises to the cytoplasm. The catalysed reaction is L-citrulline + L-aspartate + ATP = 2-(N(omega)-L-arginino)succinate + AMP + diphosphate + H(+). The protein operates within amino-acid biosynthesis; L-arginine biosynthesis; L-arginine from L-ornithine and carbamoyl phosphate: step 2/3. This chain is Argininosuccinate synthase (argG), found in Bradyrhizobium diazoefficiens (strain JCM 10833 / BCRC 13528 / IAM 13628 / NBRC 14792 / USDA 110).